The following is a 502-amino-acid chain: Chromatin structure-remodeling complex protein RSC58 (502 aa).

Residues 19 to 134 enclose the Bromo domain; the sequence is SILNAASVKC…KFSSELLLRE (116 aa). Residues 336 to 378 are disordered; that stretch reads NEEGINRKQNDENNKNVDGKSNGVQDDGGDNDNDATIASANSE. The span at 339 to 353 shows a compositional bias: basic and acidic residues; it reads GINRKQNDENNKNVD.

In terms of assembly, component of the two forms of the RSC complex composed of at least either RSC1 or RSC2, and ARP7, ARP9, LDB7, NPL6, RSC3, RSC30, RSC4, RSC58, RSC6, RSC8, RSC9, SFH1, STH1, HTL1 and probably RTT102. The complexes interact with histone and histone variant components of centromeric chromatin.

The protein localises to the nucleus. Functionally, component of the chromatin structure-remodeling complex (RSC), which is involved in transcription regulation and nucleosome positioning. RSC is responsible for the transfer of a histone octamer from a nucleosome core particle to naked DNA. The reaction requires ATP and involves an activated RSC-nucleosome intermediate. Remodeling reaction also involves DNA translocation, DNA twist and conformational change. As a reconfigurer of centromeric and flanking nucleosomes, RSC complex is required both for proper kinetochore function in chromosome segregation and, via a PKC1-dependent signaling pathway, for organization of the cellular cytoskeleton. This is Chromatin structure-remodeling complex protein RSC58 (RSC58) from Saccharomyces cerevisiae (strain ATCC 204508 / S288c) (Baker's yeast).